The chain runs to 344 residues: UDP-3-O-acylglucosamine N-acyltransferase (344 aa).

His-248 (proton acceptor) is an active-site residue.

This sequence belongs to the transferase hexapeptide repeat family. LpxD subfamily. Homotrimer.

It carries out the reaction a UDP-3-O-[(3R)-3-hydroxyacyl]-alpha-D-glucosamine + a (3R)-hydroxyacyl-[ACP] = a UDP-2-N,3-O-bis[(3R)-3-hydroxyacyl]-alpha-D-glucosamine + holo-[ACP] + H(+). The protein operates within bacterial outer membrane biogenesis; LPS lipid A biosynthesis. Catalyzes the N-acylation of UDP-3-O-acylglucosamine using 3-hydroxyacyl-ACP as the acyl donor. Is involved in the biosynthesis of lipid A, a phosphorylated glycolipid that anchors the lipopolysaccharide to the outer membrane of the cell. This chain is UDP-3-O-acylglucosamine N-acyltransferase, found in Prochlorococcus marinus (strain MIT 9312).